The sequence spans 367 residues: Probable protein phosphatase 2C 57 (367 aa).

The tract at residues 1–29 (MEEHRLGGGGGGGGGGGRPPIPGAAGRKL) is disordered. The segment covering 7-18 (GGGGGGGGGGGR) has biased composition (gly residues). The PPM-type phosphatase domain maps to 67 to 331 (RSGGWADIGS…DNLSVVVICF (265 aa)). Residues Asp111, Gly112, Asp279, and Asp322 each contribute to the Mn(2+) site.

It belongs to the PP2C family. Requires Mg(2+) as cofactor. Mn(2+) is required as a cofactor.

The catalysed reaction is O-phospho-L-seryl-[protein] + H2O = L-seryl-[protein] + phosphate. It catalyses the reaction O-phospho-L-threonyl-[protein] + H2O = L-threonyl-[protein] + phosphate. This chain is Probable protein phosphatase 2C 57, found in Oryza sativa subsp. japonica (Rice).